The primary structure comprises 151 residues: Cytochrome c-type biogenesis protein CcmE 2 (151 aa).

Residues 1–8 lie on the Cytoplasmic side of the membrane; it reads MNPLRKKR. Residues 9–29 form a helical; Signal-anchor for type II membrane protein membrane-spanning segment; the sequence is LVIILAILVGVGAAVGLALSA. Residues 30–151 lie on the Periplasmic side of the membrane; that stretch reads LQQNINLFYT…QSAPAPGKEG (122 aa). The heme site is built by His-124 and Tyr-128.

It belongs to the CcmE/CycJ family.

Its subcellular location is the cell inner membrane. Heme chaperone required for the biogenesis of c-type cytochromes. Transiently binds heme delivered by CcmC and transfers the heme to apo-cytochromes in a process facilitated by CcmF and CcmH. The protein is Cytochrome c-type biogenesis protein CcmE 2 of Pseudomonas fluorescens (strain Pf0-1).